The following is a 1124-amino-acid chain: Tyrosine-protein kinase JAK3 (1124 aa).

Residues 1 to 223 (MAPPSEETPL…RRTVRRALRR (223 aa)) form an interaction with cytokine/interferon/growth hormone receptors region. Serine 17 carries the post-translational modification Phosphoserine. In terms of domain architecture, FERM spans 24–356 (GALHVLLPAR…GYFRLTTDSQ (333 aa)). One can recognise an SH2; atypical domain in the interval 375-475 (QCHGPITLDF…GVAVTLTSCC (101 aa)). In terms of domain architecture, Protein kinase 1 spans 521–781 (LEWHENLGHG…AVIRDLNSLI (261 aa)). Phosphotyrosine; by autocatalysis is present on tyrosine 785. Positions 822-1111 (LKYISQLGKG…SRGCETHAFT (290 aa)) constitute a Protein kinase 2 domain. ATP-binding positions include 828–836 (LGKGNFGSV) and lysine 855. A phosphotyrosine mark is found at tyrosine 904 and tyrosine 939. The Proton acceptor role is filled by aspartate 949. A phosphotyrosine; by autocatalysis mark is found at tyrosine 980 and tyrosine 981.

The protein belongs to the protein kinase superfamily. Tyr protein kinase family. JAK subfamily. In terms of assembly, interacts with STAM2 and MYO18A. Interacts with SHB. Interacts with CD69. Tyrosine phosphorylated in response to IL-2 and IL-4. Dephosphorylation of Tyr-980 and Tyr-981 by PTPN2 negatively regulates cytokine-mediated signaling. As to expression, in NK cells and an NK-like cell line but not in resting T-cells or in other tissues. The S-form is more commonly seen in hematopoietic lines, whereas the B-form is detected in cells both of hematopoietic and epithelial origins.

The protein resides in the endomembrane system. Its subcellular location is the cytoplasm. It catalyses the reaction L-tyrosyl-[protein] + ATP = O-phospho-L-tyrosyl-[protein] + ADP + H(+). In terms of biological role, non-receptor tyrosine kinase involved in various processes such as cell growth, development, or differentiation. Mediates essential signaling events in both innate and adaptive immunity and plays a crucial role in hematopoiesis during T-cells development. In the cytoplasm, plays a pivotal role in signal transduction via its association with type I receptors sharing the common subunit gamma such as IL2R, IL4R, IL7R, IL9R, IL15R and IL21R. Following ligand binding to cell surface receptors, phosphorylates specific tyrosine residues on the cytoplasmic tails of the receptor, creating docking sites for STATs proteins. Subsequently, phosphorylates the STATs proteins once they are recruited to the receptor. Phosphorylated STATs then form homodimer or heterodimers and translocate to the nucleus to activate gene transcription. For example, upon IL2R activation by IL2, JAK1 and JAK3 molecules bind to IL2R beta (IL2RB) and gamma chain (IL2RG) subunits inducing the tyrosine phosphorylation of both receptor subunits on their cytoplasmic domain. Then, STAT5A and STAT5B are recruited, phosphorylated and activated by JAK1 and JAK3. Once activated, dimerized STAT5 translocates to the nucleus and promotes the transcription of specific target genes in a cytokine-specific fashion. This is Tyrosine-protein kinase JAK3 from Homo sapiens (Human).